A 1194-amino-acid chain; its full sequence is Peroxisomal ATPase PEX1 (1194 aa).

Residues 220–255 form a disordered region; the sequence is KTRQRRMSHQGKSVKAKSLASTRHGKRRDDGSGPSG. Residues 221-234 are compositionally biased toward basic residues; it reads TRQRRMSHQGKSVK. Residues 538–730 form an AAA-cassette D1 region; the sequence is RSASVLLTGA…GPEPTLKIEK (193 aa). Residues 546 to 553 and 849 to 856 each bind ATP; these read GARGSGKT and GYPGCGKT. Positions 844–1028 are AAA-cassette D2; that stretch reads GLLLYGYPGC…LYNAHLEAIH (185 aa). Disordered stretches follow at residues 1062 to 1084, 1116 to 1139, and 1174 to 1194; these read YISFSMGNKDSTGEPSTQPLTNG, QVQQQQSQTNQAQEEEKGDDEPVI, and RSGEMPSGQSSTEIGGRSSLM. The span at 1066-1084 shows a compositional bias: polar residues; that stretch reads SMGNKDSTGEPSTQPLTNG. Low complexity predominate over residues 1116–1127; sequence QVQQQQSQTNQA.

The protein belongs to the AAA ATPase family. As to quaternary structure, interacts with PEX6; forming the PEX1-PEX6 AAA ATPase complex, which is composed of a heterohexamer formed by a trimer of PEX1-PEX6 dimers.

It is found in the cytoplasm. The protein localises to the cytosol. Its subcellular location is the peroxisome membrane. The catalysed reaction is ATP + H2O = ADP + phosphate + H(+). In terms of biological role, component of the PEX1-PEX6 AAA ATPase complex, a protein dislocase complex that mediates the ATP-dependent extraction of the PEX5 receptor from peroxisomal membranes, an essential step for PEX5 recycling. Specifically recognizes PEX5 monoubiquitinated at 'Cys-6', and pulls it out of the peroxisome lumen through the PEX2-PEX10-PEX12 retrotranslocation channel. Extraction by the PEX1-PEX6 AAA ATPase complex is accompanied by unfolding of the TPR repeats and release of bound cargo from PEX5. Regulates autophagy and biogenesis of peroxisomes and Woronin bodies. Plays important roles in mycelial growth and development and stress response. Is also essential for conidiation and fatty acid utilization. Required for nematode predation via trap formation. In Arthrobotrys oligospora (strain ATCC 24927 / CBS 115.81 / DSM 1491) (Nematode-trapping fungus), this protein is Peroxisomal ATPase PEX1.